Consider the following 176-residue polypeptide: Ferritin heavy polypeptide-like 17E (176 aa).

The region spanning 10–159 (QNYDWQCEDA…GYLTNLRQMG (150 aa)) is the Ferritin-like diiron domain. The Fe cation site is built by C27, E107, and Q141.

The protein belongs to the ferritin family. As to expression, expressed in the testes and spermatogonia.

The sequence is that of Ferritin heavy polypeptide-like 17E from Mus musculus (Mouse).